The sequence spans 109 residues: Small ribosomal subunit protein uS17A (109 aa).

It belongs to the universal ribosomal protein uS17 family. Part of the 30S ribosomal subunit.

Its function is as follows. One of the primary rRNA binding proteins, it binds specifically to the 5'-end of 16S ribosomal RNA. In Methanosarcina acetivorans (strain ATCC 35395 / DSM 2834 / JCM 12185 / C2A), this protein is Small ribosomal subunit protein uS17A.